A 97-amino-acid polypeptide reads, in one-letter code: Probable lipopolysaccharide assembly protein A (97 aa).

A run of 2 helical transmembrane segments spans residues 1–21 and 46–66; these read MIKYILGIVIFIAIVLVAITI and VAILFGLGLILGWLITAFFYI. The stretch at 67–95 forms a coiled coil; sequence KLKLKNMALARQVKRQTLQINELTTTRDK.

This sequence belongs to the LapA family.

The protein localises to the cell inner membrane. Involved in the assembly of lipopolysaccharide (LPS). The sequence is that of Probable lipopolysaccharide assembly protein A from Haemophilus influenzae (strain ATCC 51907 / DSM 11121 / KW20 / Rd).